A 382-amino-acid chain; its full sequence is Gap junction alpha-1 protein (382 aa).

The Cytoplasmic segment spans residues 2–23 (GDWSALGKLLDKVQAYSTAGGK). Ser5 bears the Phosphoserine mark. The chain crosses the membrane as a helical span at residues 24-44 (VWLSVLFIFRILLLGTAVESA). Residues 45–76 (WGDEQSAFRCNTQQPGCENVCYDKSFPISHVR) are Extracellular-facing. 2 cysteine pairs are disulfide-bonded: Cys54/Cys192 and Cys187/Cys198. The chain crosses the membrane as a helical span at residues 77–97 (FWVLQIIFVSVPTLLYLAHVF). Over 98-155 (YVMRKEEKLNKKEEELKVAQTDGVNVDMHLKQIEIKKFKYGIEEHGKVKMRGGLLRTY) the chain is Cytoplasmic. Lys144 participates in a covalent cross-link: Glycyl lysine isopeptide (Lys-Gly) (interchain with G-Cter in SUMO). The chain crosses the membrane as a helical span at residues 156–176 (IISILFKSIFEVAFLLIQWYI). The Extracellular portion of the chain corresponds to 177-207 (YGFSLSAVYTCKRDPCPHQVDCFLSRPTEKT). The chain crosses the membrane as a helical span at residues 208-228 (IFIIFMLVVSLVSLALNIIEL). Residues 229-382 (FYVFFKGVKD…SRPRPDDLEI (154 aa)) are Cytoplasmic-facing. Lys237 is covalently cross-linked (Glycyl lysine isopeptide (Lys-Gly) (interchain with G-Cter in SUMO)). The interaction with NOV stretch occupies residues 244–382 (SDPYHATSGA…SRPRPDDLEI (139 aa)). Tyr247 is modified (phosphotyrosine). 2 positions are modified to phosphoserine: Ser255 and Ser262. Residues 264–382 (KYAYFNGCSS…SRPRPDDLEI (119 aa)) are interaction with UBQLN4. Cys271 bears the S-nitrosocysteine mark. At Thr275 the chain carries Phosphothreonine. Phosphoserine occurs at positions 306 and 314. Positions 317–332 (QNRMGQAGSTISNSHA) are enriched in polar residues. Residues 317-382 (QNRMGQAGST…SRPRPDDLEI (66 aa)) form a disordered region. Residue Ser325 is modified to Phosphoserine; by CK1. Thr326 carries the post-translational modification Phosphothreonine. A phosphoserine; by CK1 mark is found at Ser328 and Ser330. Phosphoserine is present on residues Ser344 and Ser365. A compositionally biased stretch (low complexity) spans 362–374 (RPSSRASSRASSR). Ser368 bears the Phosphoserine; by PKC/PRKCG and PKC/PRKCD mark. Phosphoserine is present on residues Ser369 and Ser373.

This sequence belongs to the connexin family. Alpha-type (group II) subfamily. A connexon is composed of a hexamer of connexins. Interacts (via C-terminus) with TJP1. Interacts (via C-terminus) with SRC (via SH3 domain). Interacts (not ubiquitinated) with UBQLN4 (via UBA domain). Interacts with SGSM3 and CNST. Interacts with RIC1/CIP150. Interacts with CSNK1D. Interacts with NOV. Interacts with TMEM65. Interacts with ANK3/ANKG and PKP2. Phosphorylated at Ser-368 by PRKCG; phosphorylation induces disassembly of gap junction plaques and inhibition of gap junction activity. Phosphorylation at Ser-325, Ser-328 and Ser-330 by CK1 modulates gap junction assembly. Phosphorylation at Ser-368 by PRKCD triggers its internalization into small vesicles leading to proteasome-mediated degradation. In terms of processing, sumoylated with SUMO1, SUMO2 and SUMO3, which may regulate the level of functional Cx43 gap junctions at the plasma membrane. May be desumoylated by SENP1 or SENP2. Post-translationally, S-nitrosylation at Cys-271 is enriched at the muscle endothelial gap junction in arteries, it augments channel permeability and may regulate of smooth muscle cell to endothelial cell communication. Acetylated in the developing cortex; leading to delocalization from the cell membrane. Expressed at intercalated disks in the heart (at protein level). Expressed in the fetal cochlea.

It localises to the cell membrane. The protein localises to the cell junction. Its subcellular location is the gap junction. It is found in the endoplasmic reticulum. Functionally, gap junction protein that acts as a regulator of bladder capacity. A gap junction consists of a cluster of closely packed pairs of transmembrane channels, the connexons, through which materials of low MW diffuse from one cell to a neighboring cell. May play a critical role in the physiology of hearing by participating in the recycling of potassium to the cochlear endolymph. Negative regulator of bladder functional capacity: acts by enhancing intercellular electrical and chemical transmission, thus sensitizing bladder muscles to cholinergic neural stimuli and causing them to contract. May play a role in cell growth inhibition through the regulation of NOV expression and localization. Plays an essential role in gap junction communication in the ventricles. This chain is Gap junction alpha-1 protein (GJA1), found in Homo sapiens (Human).